Here is a 761-residue protein sequence, read N- to C-terminus: Zinc finger protein 711 (761 aa).

5 C2H2-type zinc fingers span residues 383-408 (YPCHICGKKFKSRGFLKRHMKNHPDH), 414-436 (YQCTDCEFTTNKKVSFHNHLESH), 476-499 (HKCKYCEYETAEQGLLNRHLLAVH), 505-527 (HVCVECAKGFRHPSELKKHMRTH), and 533-556 (FHCQHCEFSCADQSNLKTHIKSKH). The segment at 562–584 (FKCGHCPQAFADDKELQRHAEIF) adopts a C2H2-type 6; atypical zinc-finger fold. Zn(2+) contacts are provided by cysteine 564, cysteine 567, and histidine 580. C2H2-type zinc fingers lie at residues 590–613 (HQCPHCEHKSTNSSDLKRHIISVH), 619–641 (HKCDVCEKGFHRPSELKKHSETH), 647–670 (HQCRHCDFKTLDPFTLSRHILSVH), 676–698 (FKCKRCKRGFRHQNELKKHMKTH), 704–727 (YQCQYCEYNTTDASGFKRHVISIH), and 733–755 (HRCDYCKKGFRRPSEKNQHIMRH).

The protein belongs to the krueppel C2H2-type zinc-finger protein family. In terms of tissue distribution, present in ovary and brain but not in other tissues (at protein level).

Its subcellular location is the nucleus. The protein localises to the cytoplasm. Its function is as follows. Transcription regulator required for brain development. Probably acts as a transcription factor that binds to the promoter of target genes, leading to activate their expression. The sequence is that of Zinc finger protein 711 (znf711) from Danio rerio (Zebrafish).